A 170-amino-acid chain; its full sequence is ATP synthase subunit b (170 aa).

A helical membrane pass occupies residues 22-41; that stretch reads ILNWAVVVFGLYKFLPGFLG. The segment at 76–98 is disordered; that stretch reads LSSAAEKASQIKADSLKRSESIR. Positions 89–98 are enriched in basic and acidic residues; sequence DSLKRSESIR.

It belongs to the ATPase B chain family. F-type ATPases have 2 components, F(1) - the catalytic core - and F(0) - the membrane proton channel. F(1) has five subunits: alpha(3), beta(3), gamma(1), delta(1), epsilon(1). F(0) has four main subunits: a(1), b(1), b'(1) and c(10-14). The alpha and beta chains form an alternating ring which encloses part of the gamma chain. F(1) is attached to F(0) by a central stalk formed by the gamma and epsilon chains, while a peripheral stalk is formed by the delta, b and b' chains.

It localises to the cellular thylakoid membrane. Functionally, f(1)F(0) ATP synthase produces ATP from ADP in the presence of a proton or sodium gradient. F-type ATPases consist of two structural domains, F(1) containing the extramembraneous catalytic core and F(0) containing the membrane proton channel, linked together by a central stalk and a peripheral stalk. During catalysis, ATP synthesis in the catalytic domain of F(1) is coupled via a rotary mechanism of the central stalk subunits to proton translocation. Its function is as follows. Component of the F(0) channel, it forms part of the peripheral stalk, linking F(1) to F(0). The chain is ATP synthase subunit b from Prochlorococcus marinus (strain AS9601).